The primary structure comprises 902 residues: Cytosolic 10-formyltetrahydrofolate dehydrogenase (902 aa).

Positions 1–310 (MKIAVIGQSL…PASQFFKGSA (310 aa)) are hydrolase domain. Serine 9 carries the phosphoserine modification. Lysine 38 is subject to N6-succinyllysine. 88–90 (QFI) is a binding site for (6R)-10-formyltetrahydrofolate. Catalysis depends on histidine 106, which acts as the Proton donor. Aspartate 142 contributes to the (6R)-10-formyltetrahydrofolate binding site. In terms of domain architecture, Carrier spans 318–395 (EEELATAEAV…DFIQLLVRKL (78 aa)). Serine 354 is subject to O-(pantetheine 4'-phosphoryl)serine. Residues 417–902 (TLQMPYQLFI…LRIKTVTFEY (486 aa)) form an aldehyde dehydrogenase domain region. Residues 571-573 (IPW) and 597-600 (KPAQ) contribute to the NADP(+) site. Phosphoserine is present on residues serine 629 and serine 631. NADP(+)-binding positions include 630–635 (GSLVGQ) and 650–651 (GS). The residue at position 660 (lysine 660) is an N6-succinyllysine. The Proton acceptor role is filled by glutamate 673. Position 673-674 (673-674 (EL)) interacts with NADP(+). The active-site Proton donor is cysteine 707. Residue lysine 757 coordinates NADP(+). The residue at position 767 (lysine 767) is an N6-succinyllysine. 804–806 (ESF) contributes to the NADP(+) binding site. Position 825 is a phosphoserine (serine 825). Lysine 882 bears the N6-acetyllysine mark.

In the N-terminal section; belongs to the GART family. It in the C-terminal section; belongs to the aldehyde dehydrogenase family. ALDH1L subfamily. In terms of assembly, homotetramer. Phosphopantetheinylation at Ser-354 by AASDHPPT is required for the formyltetrahydrofolate dehydrogenase activity. In terms of tissue distribution, highly expressed in liver (at protein level). Also expressed in pancreas, brain and lung (at protein level).

It is found in the cytoplasm. The protein localises to the cytosol. It carries out the reaction (6R)-10-formyltetrahydrofolate + NADP(+) + H2O = (6S)-5,6,7,8-tetrahydrofolate + CO2 + NADPH + H(+). Functionally, cytosolic 10-formyltetrahydrofolate dehydrogenase that catalyzes the NADP(+)-dependent conversion of 10-formyltetrahydrofolate to tetrahydrofolate and carbon dioxide. May also have an NADP(+)-dependent aldehyde dehydrogenase activity towards formaldehyde, acetaldehyde, propionaldehyde, and benzaldehyde. The sequence is that of Cytosolic 10-formyltetrahydrofolate dehydrogenase from Mus musculus (Mouse).